The following is a 1222-amino-acid chain: ATP-dependent helicase/nuclease subunit A (1222 aa).

Residues 39–495 (QKRTAQQIEA…ILLKENFRSQ (457 aa)) enclose the UvrD-like helicase ATP-binding domain. An ATP-binding site is contributed by 60–67 (ASAGSGKT). One can recognise a UvrD-like helicase C-terminal domain in the interval 524 to 810 (QLIAGSHAQT…NLMTIHKSKG (287 aa)).

Belongs to the helicase family. AddA subfamily. In terms of assembly, heterodimer of AddA and AddB/RexB. The cofactor is Mg(2+).

It carries out the reaction Couples ATP hydrolysis with the unwinding of duplex DNA by translocating in the 3'-5' direction.. The catalysed reaction is ATP + H2O = ADP + phosphate + H(+). The heterodimer acts as both an ATP-dependent DNA helicase and an ATP-dependent, dual-direction single-stranded exonuclease. Recognizes the chi site generating a DNA molecule suitable for the initiation of homologous recombination. The AddA nuclease domain is required for chi fragment generation; this subunit has the helicase and 3' -&gt; 5' nuclease activities. The chain is ATP-dependent helicase/nuclease subunit A from Streptococcus pyogenes serotype M6 (strain ATCC BAA-946 / MGAS10394).